Reading from the N-terminus, the 344-residue chain is Meiotically up-regulated gene 10 protein (344 aa).

The 160-residue stretch at 48–207 (EFNSILQEII…RELCSYIDQE (160 aa)) folds into the DH domain.

Its subcellular location is the cytoplasm. It localises to the nucleus. Its function is as follows. Has a role in meiosis. The chain is Meiotically up-regulated gene 10 protein (mug10) from Schizosaccharomyces pombe (strain 972 / ATCC 24843) (Fission yeast).